The primary structure comprises 86 residues: MGIFDLLKKKQKPSTAAVAKERLQIIVAHERKKRTEPDYLPMMQQEIIQVIRKYVTIADDQVSVQLDNNDECSVLELNVTLPDSNS.

It belongs to the MinE family.

Its function is as follows. Prevents the cell division inhibition by proteins MinC and MinD at internal division sites while permitting inhibition at polar sites. This ensures cell division at the proper site by restricting the formation of a division septum at the midpoint of the long axis of the cell. This chain is Cell division topological specificity factor, found in Alteromonas mediterranea (strain DSM 17117 / CIP 110805 / LMG 28347 / Deep ecotype).